Reading from the N-terminus, the 387-residue chain is Colicin-N (387 aa).

Residues 1–11 are compositionally biased toward polar residues; that stretch reads MGSNGADNAHN. The tract at residues 1-106 is disordered; that stretch reads MGSNGADNAH…ITITPDNSKP (106 aa). A compositionally biased stretch (gly residues) spans 14–30; the sequence is FGGGKNPGIGNTSGAGS. Residues 31-48 show a composition bias toward low complexity; the sequence is NGSASSNRGNSNGWSWSN. Residues 78 to 87 are compositionally biased toward gly residues; that stretch reads GNSGNRGNNG. A run of 2 helical transmembrane segments spans residues 325–345 and 350–370; these read IIGG…LSFL and LAVT…SSFI.

This sequence belongs to the channel forming colicin family.

It is found in the cell membrane. This colicin is a channel-forming colicin. This class of transmembrane toxins depolarize the cytoplasmic membrane, leading to dissipation of cellular energy. In terms of biological role, colicins are polypeptide toxins produced by and active against E.coli and closely related bacteria. The polypeptide is Colicin-N (cna) (Escherichia coli).